The following is a 216-amino-acid chain: Adenylate kinase (216 aa).

10-15 (GAGKGT) serves as a coordination point for ATP. The interval 30–59 (STGDIFRANIKEKTPLGIEAKRYIDNGQLV) is NMP. AMP contacts are provided by residues threonine 31, arginine 36, 57–59 (QLV), 85–88 (GFPR), and glutamine 92. The interval 126–163 (GRRVCTSCGASYHIRFNPPKIEGKCDICDNELIQRKDD) is LID. Arginine 127 is an ATP binding site. The Zn(2+) site is built by cysteine 130 and cysteine 133. 136 to 137 (SY) provides a ligand contact to ATP. Zn(2+)-binding residues include cysteine 150 and cysteine 153. Residues arginine 160 and arginine 171 each contribute to the AMP site. Glutamate 199 provides a ligand contact to ATP.

The protein belongs to the adenylate kinase family. Monomer.

The protein resides in the cytoplasm. It carries out the reaction AMP + ATP = 2 ADP. It participates in purine metabolism; AMP biosynthesis via salvage pathway; AMP from ADP: step 1/1. Its function is as follows. Catalyzes the reversible transfer of the terminal phosphate group between ATP and AMP. Plays an important role in cellular energy homeostasis and in adenine nucleotide metabolism. The chain is Adenylate kinase from Clostridium botulinum (strain 657 / Type Ba4).